The following is a 178-amino-acid chain: Cytochrome c-type biogenesis protein CcmE (178 aa).

Topologically, residues 1 to 8 (MNPRRKKR) are cytoplasmic. Residues 9 to 29 (LAIVGSILIGIGVVSGLVLYA) traverse the membrane as a helical; Signal-anchor for type II membrane protein segment. Residues 30-178 (LSQNIDLFFT…QLESKKTNSY (149 aa)) lie on the Periplasmic side of the membrane. Positions 143 and 147 each coordinate heme. The interval 154–178 (EAAGQKHDKATYSDKQLESKKTNSY) is disordered. The segment covering 157–178 (GQKHDKATYSDKQLESKKTNSY) has biased composition (basic and acidic residues).

Belongs to the CcmE/CycJ family.

Its subcellular location is the cell inner membrane. Its function is as follows. Heme chaperone required for the biogenesis of c-type cytochromes. Transiently binds heme delivered by CcmC and transfers the heme to apo-cytochromes in a process facilitated by CcmF and CcmH. This chain is Cytochrome c-type biogenesis protein CcmE, found in Colwellia psychrerythraea (strain 34H / ATCC BAA-681) (Vibrio psychroerythus).